The primary structure comprises 335 residues: RNA 3'-terminal phosphate cyclase (335 aa).

Residues Q101 and 282 to 285 each bind ATP; that span reads HMGD. H306 (tele-AMP-histidine intermediate) is an active-site residue.

Belongs to the RNA 3'-terminal cyclase family. Type 1 subfamily.

The protein resides in the cytoplasm. It catalyses the reaction a 3'-end 3'-phospho-ribonucleotide-RNA + ATP = a 3'-end 2',3'-cyclophospho-ribonucleotide-RNA + AMP + diphosphate. Functionally, catalyzes the conversion of 3'-phosphate to a 2',3'-cyclic phosphodiester at the end of RNA. The mechanism of action of the enzyme occurs in 3 steps: (A) adenylation of the enzyme by ATP; (B) transfer of adenylate to an RNA-N3'P to produce RNA-N3'PP5'A; (C) and attack of the adjacent 2'-hydroxyl on the 3'-phosphorus in the diester linkage to produce the cyclic end product. The biological role of this enzyme is unknown but it is likely to function in some aspects of cellular RNA processing. This is RNA 3'-terminal phosphate cyclase from Sulfolobus acidocaldarius (strain ATCC 33909 / DSM 639 / JCM 8929 / NBRC 15157 / NCIMB 11770).